The following is a 715-amino-acid chain: Fatty acid oxidation complex subunit alpha (715 aa).

The segment at 1–190 is enoyl-CoA hydratase; the sequence is MTTTSAFMLN…RAGLVDDVVP (190 aa). The segment at 306-715 is 3-hydroxyacyl-CoA dehydrogenase; it reads GPLNSVGILG…WTNGETDQGN (410 aa).

The protein in the N-terminal section; belongs to the enoyl-CoA hydratase/isomerase family. In the central section; belongs to the 3-hydroxyacyl-CoA dehydrogenase family. As to quaternary structure, heterotetramer of two alpha chains (FadJ) and two beta chains (FadI).

The protein localises to the cytoplasm. It carries out the reaction a (3S)-3-hydroxyacyl-CoA = a (2E)-enoyl-CoA + H2O. It catalyses the reaction a 4-saturated-(3S)-3-hydroxyacyl-CoA = a (3E)-enoyl-CoA + H2O. The catalysed reaction is a (3S)-3-hydroxyacyl-CoA + NAD(+) = a 3-oxoacyl-CoA + NADH + H(+). The enzyme catalyses (3S)-3-hydroxybutanoyl-CoA = (3R)-3-hydroxybutanoyl-CoA. It participates in lipid metabolism; fatty acid beta-oxidation. Catalyzes the formation of a hydroxyacyl-CoA by addition of water on enoyl-CoA. Also exhibits 3-hydroxyacyl-CoA epimerase and 3-hydroxyacyl-CoA dehydrogenase activities. The chain is Fatty acid oxidation complex subunit alpha from Salmonella schwarzengrund (strain CVM19633).